Consider the following 351-residue polypeptide: Putative aryl-alcohol dehydrogenase C977.14c (351 aa).

Serine 113 carries the post-translational modification Phosphoserine.

Belongs to the aldo/keto reductase family. Aldo/keto reductase 2 subfamily.

It is found in the cytoplasm. The protein resides in the nucleus. The chain is Putative aryl-alcohol dehydrogenase C977.14c from Schizosaccharomyces pombe (strain 972 / ATCC 24843) (Fission yeast).